A 321-amino-acid chain; its full sequence is Transmembrane protein 255A (321 aa).

4 helical membrane passes run 29-49, 56-76, 88-108, and 200-220; these read VFVTVTLLIVSSLIFTLGMAA, VTVGGYYPGVILGFGSILGII, LVASIVFISFGVIAAFCCAIV, and TILNIVGLFLGIITAAVLGGF. Over residues 279-297 the composition is skewed to polar residues; sequence STPSGLSDDPNGQASSFMW. Residues 279-300 are disordered; that stretch reads STPSGLSDDPNGQASSFMWPSN.

Belongs to the TMEM255 family.

It is found in the membrane. The polypeptide is Transmembrane protein 255A (tmem255a) (Xenopus laevis (African clawed frog)).